A 302-amino-acid chain; its full sequence is Glutaminase (302 aa).

The substrate site is built by Ser-61, Asn-111, Glu-155, Asn-162, Tyr-186, Tyr-238, and Val-256.

The protein belongs to the glutaminase family. As to quaternary structure, homotetramer.

The catalysed reaction is L-glutamine + H2O = L-glutamate + NH4(+). The protein is Glutaminase of Stutzerimonas stutzeri (strain A1501) (Pseudomonas stutzeri).